Here is a 256-residue protein sequence, read N- to C-terminus: Thiazole synthase (256 aa).

The Schiff-base intermediate with DXP role is filled by K95. 1-deoxy-D-xylulose 5-phosphate-binding positions include G156, 182–183 (AG), and 204–205 (NT).

This sequence belongs to the ThiG family. Homotetramer. Forms heterodimers with either ThiH or ThiS.

The protein localises to the cytoplasm. It carries out the reaction [ThiS sulfur-carrier protein]-C-terminal-Gly-aminoethanethioate + 2-iminoacetate + 1-deoxy-D-xylulose 5-phosphate = [ThiS sulfur-carrier protein]-C-terminal Gly-Gly + 2-[(2R,5Z)-2-carboxy-4-methylthiazol-5(2H)-ylidene]ethyl phosphate + 2 H2O + H(+). It functions in the pathway cofactor biosynthesis; thiamine diphosphate biosynthesis. Catalyzes the rearrangement of 1-deoxy-D-xylulose 5-phosphate (DXP) to produce the thiazole phosphate moiety of thiamine. Sulfur is provided by the thiocarboxylate moiety of the carrier protein ThiS. In vitro, sulfur can be provided by H(2)S. This Enterobacter sp. (strain 638) protein is Thiazole synthase.